The chain runs to 531 residues: Zinc finger protein 692 (531 aa).

Positions 155–178 (EAQGLECEQRERTQETRLSRRVDS) are enriched in basic and acidic residues. Disordered stretches follow at residues 155–249 (EAQG…PATL) and 287–307 (MTES…PTWD). A compositionally biased stretch (acidic residues) spans 186-206 (LGEDQDVEEEEEEEEEEEELL). Ser231 carries the post-translational modification Phosphoserine. Residues 290-303 (SLESPGSQAQSAPN) are compositionally biased toward polar residues. 5 consecutive C2H2-type zinc fingers follow at residues 327 to 352 (MPCD…KYQH), 358 to 382 (FCCP…VKLH), 388 to 410 (YICE…RRIH), 416 to 438 (LQCE…RRKH), and 447 to 470 (FPCE…SKSH). Residue Ser469 is modified to Phosphoserine. The disordered stretch occupies residues 474–531 (LPAQEPPGSLVSSPSISAPESLQSPEGASISTTSDSNPASSTSISSPGVPDPRNREKS). A compositionally biased stretch (polar residues) spans 483-499 (LVSSPSISAPESLQSPE). The span at 502–520 (SISTTSDSNPASSTSISSP) shows a compositional bias: low complexity.

Belongs to the krueppel C2H2-type zinc-finger protein family. Post-translationally, phosphorylation at Ser-469 results in loss of DNA-binding activity.

It localises to the nucleus. In terms of biological role, may act as an transcriptional repressor for PCK1 gene expression, in turn may participate in the hepatic gluconeogenesis regulation through the activated AMPK signaling pathway. This Mus musculus (Mouse) protein is Zinc finger protein 692.